The following is a 252-amino-acid chain: Ribosomal RNA small subunit methyltransferase J (252 aa).

Residues 104–105 (RD), 120–121 (ER), 156–157 (SS), and Asp-174 contribute to the S-adenosyl-L-methionine site.

Belongs to the methyltransferase superfamily. RsmJ family.

The protein localises to the cytoplasm. It catalyses the reaction guanosine(1516) in 16S rRNA + S-adenosyl-L-methionine = N(2)-methylguanosine(1516) in 16S rRNA + S-adenosyl-L-homocysteine + H(+). Its function is as follows. Specifically methylates the guanosine in position 1516 of 16S rRNA. This is Ribosomal RNA small subunit methyltransferase J from Yersinia enterocolitica serotype O:8 / biotype 1B (strain NCTC 13174 / 8081).